The primary structure comprises 472 residues: Ribulose bisphosphate carboxylase large chain 1 (472 aa).

The substrate site is built by Asn-115 and Thr-165. Lys-167 serves as the catalytic Proton acceptor. Lys-169 is a binding site for substrate. Mg(2+) contacts are provided by Lys-193, Asp-195, and Glu-196. Lys-193 carries the post-translational modification N6-carboxylysine. The active-site Proton acceptor is His-286. Residues Arg-287, His-319, and Ser-371 each coordinate substrate.

This sequence belongs to the RuBisCO large chain family. Type I subfamily. In terms of assembly, heterohexadecamer of 8 large chains and 8 small chains. Mg(2+) serves as cofactor.

The catalysed reaction is 2 (2R)-3-phosphoglycerate + 2 H(+) = D-ribulose 1,5-bisphosphate + CO2 + H2O. It catalyses the reaction D-ribulose 1,5-bisphosphate + O2 = 2-phosphoglycolate + (2R)-3-phosphoglycerate + 2 H(+). RuBisCO catalyzes two reactions: the carboxylation of D-ribulose 1,5-bisphosphate, the primary event in carbon dioxide fixation, as well as the oxidative fragmentation of the pentose substrate. Both reactions occur simultaneously and in competition at the same active site. The protein is Ribulose bisphosphate carboxylase large chain 1 of Rhodopseudomonas palustris (strain BisB5).